The following is a 331-amino-acid chain: Olfactory receptor 6S1 (331 aa).

Topologically, residues 1–29 (MSPDGNHSSDPTEFVLAGLPNLNSARVEL) are extracellular. N-linked (GlcNAc...) asparagine glycosylation occurs at Asn6. A helical transmembrane segment spans residues 30 to 50 (FSVFLLVYLLNLTGNVLIVGV). Over 51–59 (VRADTRLQT) the chain is Cytoplasmic. A helical transmembrane segment spans residues 60–80 (PMYFFLGNLSCLEILLTSVII). Residues 81–99 (PKMLSNFLSRQHTISFAAC) lie on the Extracellular side of the membrane. Cys99 and Cys182 are oxidised to a cystine. Residues 100–120 (ITQFYFYFFLGASEFLLLAVM) form a helical membrane-spanning segment. Residues 121–147 (SADRYLAICHPLRYPLLMSGAVCFRVA) are Cytoplasmic-facing. Residues 148–168 (LACWVGGLVPVLGPTVAVALL) traverse the membrane as a helical segment. Residues 169-207 (PFCKQGAVVQHFFCDSGPLLRLACTNTKKLEETDFVLAS) lie on the Extracellular side of the membrane. The helical transmembrane segment at 208–228 (LVIVSSLLITAVSYGLIVLAV) threads the bilayer. The Cytoplasmic segment spans residues 229–242 (LSIPSASGRQKAFS). A helical membrane pass occupies residues 243 to 263 (TCTSHLIVVTLFYGSAIFLYV). The Extracellular segment spans residues 264-274 (RPSQSGSVDTN). A helical transmembrane segment spans residues 275–295 (WAVTVITTFVTPLLNPFIYAL). The Cytoplasmic portion of the chain corresponds to 296 to 331 (RNEQVKEALKDMFRKVVAGVLGNLLLDKCLSEKAVK).

This sequence belongs to the G-protein coupled receptor 1 family.

The protein resides in the cell membrane. Odorant receptor. The protein is Olfactory receptor 6S1 (OR6S1) of Homo sapiens (Human).